We begin with the raw amino-acid sequence, 237 residues long: Orotate phosphoribosyltransferase (237 aa).

Lys-29 serves as a coordination point for 5-phospho-alpha-D-ribose 1-diphosphate. 37–38 (FF) is an orotate binding site. Residues 79-80 (YK), Arg-105, Lys-106, Lys-109, His-111, and 130-138 (DDVMSAGTA) each bind 5-phospho-alpha-D-ribose 1-diphosphate. The orotate site is built by Ser-134 and Arg-162.

Belongs to the purine/pyrimidine phosphoribosyltransferase family. PyrE subfamily. Homodimer. Requires Mg(2+) as cofactor.

It catalyses the reaction orotidine 5'-phosphate + diphosphate = orotate + 5-phospho-alpha-D-ribose 1-diphosphate. The protein operates within pyrimidine metabolism; UMP biosynthesis via de novo pathway; UMP from orotate: step 1/2. Functionally, catalyzes the transfer of a ribosyl phosphate group from 5-phosphoribose 1-diphosphate to orotate, leading to the formation of orotidine monophosphate (OMP). This chain is Orotate phosphoribosyltransferase, found in Polaromonas naphthalenivorans (strain CJ2).